We begin with the raw amino-acid sequence, 308 residues long: CASP-like protein 4A2 (308 aa).

A disordered region spans residues 1–135 (MALEAQPSPS…APAPAPRVPA (135 aa)). Topologically, residues 1–161 (MALEAQPSPS…KRPTAVLQRT (161 aa)) are cytoplasmic. Residues 22 to 31 (GGAGAPGGSA) show a composition bias toward gly residues. Residues 32-44 (GDADAQARRATSG) are compositionally biased toward low complexity. 2 stretches are compositionally biased toward pro residues: residues 54–65 (RRSPPPPFPRTP) and 89–132 (FQPP…PAPR). The chain crosses the membrane as a helical span at residues 162–182 (ALVARVAAALLCLAALAVLAA). Topologically, residues 183–203 (DSRKGFALDSYSNYSQLRYSE) are extracellular. An N-linked (GlcNAc...) asparagine glycan is attached at Asn-195. A helical transmembrane segment spans residues 204 to 224 (AVNVIGFVYSVLQFFVLADLM). Topologically, residues 225 to 240 (RRNKHLNPRRKGDYFD) are cytoplasmic. The helical transmembrane segment at 241 to 262 (FFMDQVLAYLLISSSSSATARV) threads the bilayer. Topologically, residues 263-280 (GDWIDNWGSDPFPKMANS) are extracellular. Asn-279 carries an N-linked (GlcNAc...) asparagine glycan. The helical transmembrane segment at 281–301 (SIAISFMAFLVFAISALISAY) threads the bilayer. At 302–308 (NLFRRDI) the chain is on the cytoplasmic side.

It belongs to the Casparian strip membrane proteins (CASP) family. As to quaternary structure, homodimer and heterodimers.

It is found in the cell membrane. This is CASP-like protein 4A2 from Oryza sativa subsp. japonica (Rice).